Here is a 1368-residue protein sequence, read N- to C-terminus: MGEKAIDEDKVEAMKSSKTSLVFAINGQRFELELSSIDPSTTLVDFLRNKTPFKSVKLGCGEGGCGACVVLLSKYDPLLEKVDEFTISSCLTLLCSIDGCSITTSDGLGNSRVGFHAVHERIAGFHATQCGFCTPGMSVSMFSALLNADKSHPPPRSGFSNLTAVEAEKAVSGNLCRCTGYRPLVDACKSFAADVDIEDLGFNAFCKKGENRDEVLRRLPCYDHTSSHVCTFPEFLKKEIKNDMSLHSRKYRWSSPVSVSELQGLLEVENGLSVKLVAGNTSTGYYKEEKERKYERFIDIRKIPEFTMVRSDEKGVELGACVTISKAIEVLREEKNVSVLAKIATHMEKIANRFVRNTGTIGGNIMMAQRKQFPSDLATILVAAQATVKIMTSSSSQEQFTLEEFLQQPPLDAKSLLLSLEIPSWHSAKKNGSSEDSILLFETYRAAPRPLGNALAFLNAAFSAEVTEALDGIVVNDCQLVFGAYGTKHAHRAKKVEEFLTGKVISDEVLMEAISLLKDEIVPDKGTSNPGYRSSLAVTFLFEFFGSLTKKNAKTTNGWLNGGCKEIGFDQNVESLKPEAMLSSAQQIVENQEHSPVGKGITKAGACLQASGEAVYVDDIPAPENCLYGAFIYSTMPLARIKGIRFKQNRVPEGVLGIITYKDIPKGGQNIGTNGFFTSDLLFAEEVTHCAGQIIAFLVADSQKHADIAANLVVIDYDTKDLKPPILSLEEAVENFSLFEVPPPLRGYPVGDITKGMDEAEHKILGSKISFGSQYFFYMETQTALAVPDEDNCMVVYSSTQTPEFVHQTIAGCLGVPENNVRVITRRVGGGFGGKAVKSMPVAAACALAASKMQRPVRTYVNRKTDMITTGGRHPMKVTYSVGFKSNGKITALDVEVLLDAGLTEDISPLMPKGIQGALMKYDWGALSFNVKVCKTNTVSRTALRAPGDVQGSYIGEAIIEKVASYLSVDVDEIRKVNLHTYESLRLFHSAKAGEFSEYTLPLLWDRIDEFSGFNKRRKVVEEFNASNKWRKRGISRVPAVYAVNMRSTPGRVSVLGDGSIVVEVQGIEIGQGLWTKVKQMAAYSLGLIQCGTTSDELLKKIRVIQSDTLSMVQGSMTAGSTTSEASSEAVRICCDGLVERLLPVKTALVEQTGGPVTWDSLISQAYQQSINMSVSSKYMPDSTGEYLNYGIAASEVEVNVLTGETTILRTDIIYDCGKSLNPAVDLGQIEGAFVQGLGFFMLEEFLMNSDGLVVTDSTWTYKIPTVDTIPRQFNVEILNSGQHKNRVLSSKASGEPPLLLAASVHCAVRAAVKEARKQILSWNSNKQGTDMYFELPVPATMPIVKEFCGLDVVEKYLEWKIQQRKNV.

The 2Fe-2S ferredoxin-type domain maps to 19-108; sequence TSLVFAINGQ…GCSITTSDGL (90 aa). [2Fe-2S] cluster is bound by residues Cys-60, Cys-65, and Cys-68. Positions 246–427 constitute an FAD-binding PCMH-type domain; the sequence is LHSRKYRWSS…LSLEIPSWHS (182 aa).

The protein belongs to the xanthine dehydrogenase family. As to quaternary structure, aldehyde oxidases (AO) are homodimers and heterodimers of AO subunits. AO-alpha is an AAO1 homodimer; AO-beta is an AAO1-AAO2 heterodimer. [2Fe-2S] cluster serves as cofactor. FAD is required as a cofactor. Requires Mo-molybdopterin as cofactor. In terms of tissue distribution, predominantly expressed in roots, seedlings, mature siliques and seeds, and to lower extent in stems and rosettes. In seedlings, mostly expressed in lower part of hypocotyls and roots.

Its subcellular location is the cytoplasm. The enzyme catalyses indole-3-acetaldehyde + O2 + H2O = (indol-3-yl)acetate + H2O2 + H(+). With respect to regulation, strongly inhibited by iodoacetate and potassium cyanide (KCN). Weakly inhibited by 2-mercaptoethanol, dithiothreitol (DTT), menadione, estradiol, 4'-(9-acridinylamino)methanesulfon-m-anisidine (mAMSA), allopurinol and tritonX-100. Not affected by p-chloromercuribenzoate. Functionally, in higher plants aldehyde oxidases (AO) appear to be homo- and heterodimeric assemblies of AO subunits with probably different physiological functions. AO-alpha may be involved in the biosynthesis of auxin, and in biosynthesis of abscisic acid (ABA) in seeds. In vitro, AO-alpha uses heptaldehyde, protocatechualdehyde, benzaldehyde, indole-3-aldehyde (IAld), indole-3-acetaldehyde (IAAld), cinnamaldehyde and citral as substrates; AO-beta uses IAAld, IAld and naphtaldehyde as substrates. The protein is Indole-3-acetaldehyde oxidase (AAO1) of Arabidopsis thaliana (Mouse-ear cress).